Here is a 387-residue protein sequence, read N- to C-terminus: Eukaryotic translation initiation factor 3 subunit M (387 aa).

Residues 181–340 form the PCI domain; the sequence is LSSKVMIELL…RKVHISSTMH (160 aa).

This sequence belongs to the eIF-3 subunit M family. As to quaternary structure, component of the eukaryotic translation initiation factor 3 (eIF-3) complex. The eIF-3 complex interacts with pix.

The protein resides in the cytoplasm. It is found in the golgi apparatus. Functionally, component of the eukaryotic translation initiation factor 3 (eIF-3) complex, which is involved in protein synthesis of a specialized repertoire of mRNAs and, together with other initiation factors, stimulates binding of mRNA and methionyl-tRNAi to the 40S ribosome. The eIF-3 complex specifically targets and initiates translation of a subset of mRNAs involved in cell proliferation. The polypeptide is Eukaryotic translation initiation factor 3 subunit M (Drosophila persimilis (Fruit fly)).